We begin with the raw amino-acid sequence, 322 residues long: uncharacterized protein (322 aa).

The tract at residues 269–289 (QDEEEEPRDERRPRRRLGKAQ) is disordered.

This is an uncharacterized protein from Sinorhizobium fredii (strain NBRC 101917 / NGR234).